The sequence spans 343 residues: Tetraacyldisaccharide 4'-kinase (343 aa).

ATP is bound at residue 55-62 (TVGGEGKT).

It belongs to the LpxK family.

It carries out the reaction a lipid A disaccharide + ATP = a lipid IVA + ADP + H(+). The protein operates within glycolipid biosynthesis; lipid IV(A) biosynthesis; lipid IV(A) from (3R)-3-hydroxytetradecanoyl-[acyl-carrier-protein] and UDP-N-acetyl-alpha-D-glucosamine: step 6/6. Functionally, transfers the gamma-phosphate of ATP to the 4'-position of a tetraacyldisaccharide 1-phosphate intermediate (termed DS-1-P) to form tetraacyldisaccharide 1,4'-bis-phosphate (lipid IVA). The sequence is that of Tetraacyldisaccharide 4'-kinase from Chelativorans sp. (strain BNC1).